We begin with the raw amino-acid sequence, 331 residues long: Probable endo-beta-1,4-glucanase B (331 aa).

An N-terminal signal peptide occupies residues 1–18 (MKFQSTLLLAAAAGSALA). N38 and N100 each carry an N-linked (GlcNAc...) asparagine glycan. Residue E160 is the Proton donor of the active site. N211 carries an N-linked (GlcNAc...) asparagine glycan. Residue E266 is the Nucleophile of the active site. N-linked (GlcNAc...) asparagine glycosylation is present at N288.

It belongs to the glycosyl hydrolase 5 (cellulase A) family.

The protein localises to the secreted. The enzyme catalyses Endohydrolysis of (1-&gt;4)-beta-D-glucosidic linkages in cellulose, lichenin and cereal beta-D-glucans.. Its function is as follows. Has endoglucanase activity on substrates containing beta-1,4 glycosidic bonds, like in carboxymethylcellulose (CMC), hydroxyethylcellulose (HEC) and beta-glucan. Involved in the degradation of complex natural cellulosic substrates. In Aspergillus niger (strain ATCC MYA-4892 / CBS 513.88 / FGSC A1513), this protein is Probable endo-beta-1,4-glucanase B (eglB).